We begin with the raw amino-acid sequence, 627 residues long: Sodium- and chloride-dependent GABA transporter 3 (627 aa).

A disordered region spans residues 1–36 (MTAEQALPLGNGKAAEEARGSEALGGGGGGAAGTRE). The Cytoplasmic portion of the chain corresponds to 1 to 53 (MTAEQALPLGNGKAAEEARGSEALGGGGGGAAGTREARDKAVHERGHWNNKVE). Position 21 is a phosphoserine (serine 21). The segment covering 23–32 (ALGGGGGGAA) has biased composition (gly residues). 3 consecutive transmembrane segments (helical) span residues 54–74 (FVLS…FPYL), 82–101 (AFLI…VFFL), and 126–146 (GIGY…IIIL). At 147-220 (AWAIFYLSNC…DGIEHIGNLR (74 aa)) the chain is on the extracellular side. N-linked (GlcNAc...) asparagine glycosylation is found at asparagine 182, asparagine 185, and asparagine 193. 9 helical membrane-spanning segments follow: residues 221 to 239 (WELA…FCIW), 248 to 265 (VVYV…ILLI), 301 to 318 (IFFS…LGSY), 330 to 351 (IMLC…FSVL), 384 to 403 (MPLS…FLGL), 433 to 451 (LLIL…VMLT), 468 to 488 (GMCL…VYGS), 509 to 528 (WCWK…FFLV), and 548 to 566 (IGWL…WIFI). Topologically, residues 567-627 (KLWKTEGTLP…SAITEKETHF (61 aa)) are cytoplasmic.

The protein belongs to the sodium:neurotransmitter symporter (SNF) (TC 2.A.22) family. SLC6A11 subfamily. In terms of tissue distribution, brain and retina. Expressed predominantly within neurons. Expressed in the hippocampus (at protein level).

Its subcellular location is the cell membrane. It catalyses the reaction 4-aminobutanoate(out) + chloride(out) + 2 Na(+)(out) = 4-aminobutanoate(in) + chloride(in) + 2 Na(+)(in). The catalysed reaction is taurine(out) + chloride(out) + 2 Na(+)(out) = taurine(in) + chloride(in) + 2 Na(+)(in). It carries out the reaction beta-alanine(out) + chloride(out) + 2 Na(+)(out) = beta-alanine(in) + chloride(in) + 2 Na(+)(in). The enzyme catalyses hypotaurine(out) + chloride(out) + 2 Na(+)(out) = hypotaurine(in) + chloride(in) + 2 Na(+)(in). With respect to regulation, GABA transport is inhibited by beta-alanine. Its function is as follows. Mediates sodium- and chloride-dependent transport of gamma-aminobutyric acid (GABA). Can also mediate transport of beta-alanine and to a lower extent that of taurine and hypotaurine. In Rattus norvegicus (Rat), this protein is Sodium- and chloride-dependent GABA transporter 3 (Slc6a11).